The chain runs to 835 residues: Translation initiation factor IF-2 (835 aa).

Residues 1–240 (MSDSDGKKTL…RKQERARQKA (240 aa)) form a disordered region. The segment covering 50-59 (AGKGGAGGVA) has biased composition (gly residues). The span at 86–152 (KAREAEEAAQ…AEAAKKRAAA (67 aa)) shows a compositional bias: basic and acidic residues. The span at 153-169 (DKAAAAAPKSDAGVAPA) shows a compositional bias: low complexity. Positions 184-205 (RKAEREREERGRGAKGRNDGGR) are enriched in basic and acidic residues. The 169-residue stretch at 332–500 (PRPPVITIMG…AIALQAEILE (169 aa)) folds into the tr-type G domain. The tract at residues 341-348 (GHVDHGKT) is G1. 341 to 348 (GHVDHGKT) provides a ligand contact to GTP. The segment at 366–370 (GITQH) is G2. The segment at 388–391 (DTPG) is G3. GTP-binding positions include 388 to 392 (DTPGH) and 442 to 445 (NKID). The interval 442–445 (NKID) is G4. The interval 478 to 480 (SAH) is G5.

The protein belongs to the TRAFAC class translation factor GTPase superfamily. Classic translation factor GTPase family. IF-2 subfamily.

It localises to the cytoplasm. One of the essential components for the initiation of protein synthesis. Protects formylmethionyl-tRNA from spontaneous hydrolysis and promotes its binding to the 30S ribosomal subunits. Also involved in the hydrolysis of GTP during the formation of the 70S ribosomal complex. The polypeptide is Translation initiation factor IF-2 (Ruegeria sp. (strain TM1040) (Silicibacter sp.)).